The primary structure comprises 384 residues: Glycerol 3-phosphate oxidase (384 aa).

Residues 1-17 (MQTIDVLIVGGGVIGTS) form the signal peptide. Isoleucine 14 contacts FAD. The N-palmitoyl cysteine moiety is linked to residue cysteine 18. A lipid anchor (S-diacylglycerol cysteine) is attached at cysteine 18. FAD is bound by residues glutamate 33, 42–43 (TS), and 47–49 (SGV). Residues serine 47 and histidine 51 each contribute to the sn-glycerol 3-phosphate site. The Proton acceptor role is filled by histidine 51. Valine 177 is an FAD binding site. Sn-glycerol 3-phosphate contacts are provided by lysine 258 and arginine 320. 346 to 347 (MK) lines the FAD pocket. Residue serine 348 participates in sn-glycerol 3-phosphate binding. Position 352 (threonine 352) interacts with FAD.

As to quaternary structure, monomer. It depends on FAD as a cofactor.

The protein resides in the cytoplasm. The protein localises to the cell membrane. The enzyme catalyses sn-glycerol 3-phosphate + O2 = dihydroxyacetone phosphate + H2O2. It functions in the pathway polyol metabolism; glycerol degradation via glycerol kinase pathway; glycerone phosphate from sn-glycerol 3-phosphate (aerobic route): step 1/1. Functionally, catalyzes the oxidation of glycerol 3-phosphate to dihydroxyacetone phosphate (DHAP), with a reduction of O2 to H2O2. The formation of hydrogen peroxide by this enzyme is crucial for cytotoxic effects on host cells. Does not show any dehydrogenase activity with NAD(+). The sequence is that of Glycerol 3-phosphate oxidase from Mycoplasma genitalium (strain ATCC 33530 / DSM 19775 / NCTC 10195 / G37) (Mycoplasmoides genitalium).